Reading from the N-terminus, the 486-residue chain is MYIKMATLANGQADNASLSTNGLGSSPGSAGHMNGLSHSPGNPSTIPMKDHDAIKLFIGQIPRNLDEKDLKPLFEEFGKIYELTVLKDRFTGMHKGCAFLTYCERESALKAQSALHEQKTLPGMNRPIQVKPADSESRGGSSCLRQPPSQDRKLFVGMLNKQQSEDDVRRLFEAFGNIEECTILRGPDGNSKGCAFVKYSSHAEAQAAINALHGSQTMPGASSSLVVKFADTDKERTMRRMQQMAGQMGMFNPMAIPFGAYGAYAQALMQQQAALMASVAQGGYLNPMAAFAAAQMQQMAALNMNGLAAAPMTPTSGGSTPPGITAPAVPSIPSPIGVNGFTGLPPQANGQPAAEAVFANGIHPYPAQSPTAADPLQQAYAGVQQYAGPAAYPAAYGQISQAFPQPPPMIPQQQREGPEGCNLFIYHLPQEFGDAELMQMFLPFGFVSFDNPASAQTAIQAMNGFQIGMKRLKVQLKRPKDANRPY.

A sufficient for RNA-binding and MSE-dependent splicing activity region spans residues methionine 1–glutamine 298. Residues leucine 18 to glycine 28 show a composition bias toward polar residues. 2 disordered regions span residues leucine 18–serine 39 and leucine 121–serine 149. An RRM 1 domain is found at isoleucine 54–serine 135. Polar residues predominate over residues arginine 138–serine 149. Residues arginine 152 to threonine 232 enclose the RRM 2 domain. The interval arginine 239–phenylalanine 258 is necessary for TNNT2 exon 5 inclusion. In terms of domain architecture, RRM 3 spans proline 404–proline 479.

It belongs to the CELF/BRUNOL family. In terms of tissue distribution, ubiquitous. Strongly expressed in the cerebellum, hippocampus, amygdala, temporal and frontal cortex and frontal lobes.

The protein localises to the nucleus. The protein resides in the cytoplasm. Functionally, RNA-binding protein implicated in the regulation of pre-mRNA alternative splicing. Mediates exon inclusion and/or exclusion in pre-mRNA that are subject to tissue-specific and developmentally regulated alternative splicing. Specifically activates exon 5 inclusion of cardiac isoforms of TNNT2 during heart remodeling at the juvenile to adult transition. Promotes exclusion of both the smooth muscle (SM) and non-muscle (NM) exons in actinin pre-mRNAs. Activates the splicing of MAPT/Tau exon 10. Binds to muscle-specific splicing enhancer (MSE) intronic sites flanking the alternative exon 5 of TNNT2 pre-mRNA. The chain is CUGBP Elav-like family member 4 (CELF4) from Homo sapiens (Human).